The sequence spans 268 residues: Shikimate dehydrogenase (NADP(+)) (268 aa).

Residues 15–17 (SKS) and Thr-60 contribute to the shikimate site. The active-site Proton acceptor is the Lys-64. Residues Asn-85 and Asp-101 each contribute to the shikimate site. NADP(+) is bound by residues 121–125 (GAGGS) and Leu-208. Tyr-210 is a binding site for shikimate. NADP(+) is bound at residue Gly-230.

The protein belongs to the shikimate dehydrogenase family. In terms of assembly, homodimer.

The enzyme catalyses shikimate + NADP(+) = 3-dehydroshikimate + NADPH + H(+). The protein operates within metabolic intermediate biosynthesis; chorismate biosynthesis; chorismate from D-erythrose 4-phosphate and phosphoenolpyruvate: step 4/7. Its function is as follows. Involved in the biosynthesis of the chorismate, which leads to the biosynthesis of aromatic amino acids. Catalyzes the reversible NADPH linked reduction of 3-dehydroshikimate (DHSA) to yield shikimate (SA). This chain is Shikimate dehydrogenase (NADP(+)), found in Helicobacter hepaticus (strain ATCC 51449 / 3B1).